The following is a 120-amino-acid chain: Immunoglobulin kappa variable 2-29 (120 aa).

Positions 1–20 are cleaved as a signal peptide; it reads MRLPAQLLGLLMLWIPGSSA. A framework-1 region spans residues 21–43; the sequence is DIVMTQTPLSLSVTPGQPASISC. The Ig-like domain occupies 21-120; sequence DIVMTQTPLS…YYCMQGIHLP (100 aa). A disulfide bridge links C43 with C113. Positions 44-59 are complementarity-determining-1; that stretch reads KSSQSLLHSDGKTYLY. Positions 60–74 are framework-2; it reads WYLQKPGQSPQLLIY. A complementarity-determining-2 region spans residues 75 to 81; the sequence is EVSSRFS. Residues 82–113 are framework-3; that stretch reads GVPDRFSGSGSGTDFTLKISRVEAEDVGVYYC. The interval 114–120 is complementarity-determining-3; that stretch reads MQGIHLP.

In terms of assembly, immunoglobulins are composed of two identical heavy chains and two identical light chains; disulfide-linked.

It localises to the secreted. The protein resides in the cell membrane. Its function is as follows. V region of the variable domain of immunoglobulin light chains that participates in the antigen recognition. Immunoglobulins, also known as antibodies, are membrane-bound or secreted glycoproteins produced by B lymphocytes. In the recognition phase of humoral immunity, the membrane-bound immunoglobulins serve as receptors which, upon binding of a specific antigen, trigger the clonal expansion and differentiation of B lymphocytes into immunoglobulins-secreting plasma cells. Secreted immunoglobulins mediate the effector phase of humoral immunity, which results in the elimination of bound antigens. The antigen binding site is formed by the variable domain of one heavy chain, together with that of its associated light chain. Thus, each immunoglobulin has two antigen binding sites with remarkable affinity for a particular antigen. The variable domains are assembled by a process called V-(D)-J rearrangement and can then be subjected to somatic hypermutations which, after exposure to antigen and selection, allow affinity maturation for a particular antigen. The chain is Immunoglobulin kappa variable 2-29 from Homo sapiens (Human).